The sequence spans 54 residues: Califin-B (54 aa).

Cysteines 25 and 53 form a disulfide. Leu-36 carries the post-translational modification Leucine amide.

The protein belongs to the molluscan ELH family. As to quaternary structure, this protein consists of a large 36-residue subunit, bound by a single disulfide-bond to a small 18-residue subunit.

The protein localises to the secreted. Its function is as follows. Injected in sexually mature animals califin B excites LB and LC cells of the abdominal ganglion and cause egg-laying. This chain is Califin-B, found in Aplysia californica (California sea hare).